The primary structure comprises 573 residues: ATP-dependent RNA helicase RhlB (573 aa).

Positions 9 to 37 (LTFSSFDLHPALVAGLESAGFTRCTPIQA) match the Q motif motif. A Helicase ATP-binding domain is found at 40–220 (LPVALPGGDV…YEHMNEPEKL (181 aa)). ATP is bound at residue 53–60 (AQTGTGKT). A DEAD box motif is present at residues 166 to 169 (DEAD). A Helicase C-terminal domain is found at 231–393 (RVRQRIYFPS…PVTTELLTPL (163 aa)). Over residues 391–400 (TPLPRTPRAT) the composition is skewed to low complexity. The tract at residues 391–559 (TPLPRTPRAT…AKPSGSPSLL (169 aa)) is disordered. A compositionally biased stretch (acidic residues) spans 402-411 (EGEEVDDDAG). Residues 419 to 432 (REAREQRAADEARR) are compositionally biased toward basic and acidic residues. Over residues 435–449 (GRSGPGGASRSGSGG) the composition is skewed to gly residues. The segment covering 450–461 (GRRDGAGADGKP) has biased composition (basic and acidic residues). Over residues 476–499 (PAAAPSETPVVVAAAAETPAVTAA) the composition is skewed to low complexity. Residues 505-514 (PRKRRRRRNG) show a composition bias toward basic residues. 2 stretches are compositionally biased toward low complexity: residues 516-528 (PVEG…ASTP) and 541-559 (VVAK…PSLL).

The protein belongs to the DEAD box helicase family. RhlB subfamily. Component of the RNA degradosome, which is a multiprotein complex involved in RNA processing and mRNA degradation.

Its subcellular location is the cytoplasm. It carries out the reaction ATP + H2O = ADP + phosphate + H(+). DEAD-box RNA helicase involved in RNA degradation. Has RNA-dependent ATPase activity and unwinds double-stranded RNA. This chain is ATP-dependent RNA helicase RhlB, found in Xanthomonas campestris pv. campestris (strain B100).